A 656-amino-acid chain; its full sequence is UvrABC system protein C (656 aa).

The GIY-YIG domain occupies 16–95 (TDPGVYRFRD…IKEYSPRFNV (80 aa)). The 36-residue stretch at 208–243 (GRFLRQLEAEMKQAAAAQEYERAARIRDDIQALRTV) folds into the UVR domain.

It belongs to the UvrC family. Interacts with UvrB in an incision complex.

It localises to the cytoplasm. The UvrABC repair system catalyzes the recognition and processing of DNA lesions. UvrC both incises the 5' and 3' sides of the lesion. The N-terminal half is responsible for the 3' incision and the C-terminal half is responsible for the 5' incision. This is UvrABC system protein C from Thermobifida fusca (strain YX).